The primary structure comprises 362 residues: Metacaspase-3 (362 aa).

Catalysis depends on residues H174 and C230.

This sequence belongs to the peptidase C14B family.

This chain is Metacaspase-3 (AMC3), found in Arabidopsis thaliana (Mouse-ear cress).